The sequence spans 351 residues: Lipoyl synthase (351 aa).

Positions 1 to 10 are enriched in polar residues; that stretch reads MNDSGNSSKV. Residues 1–27 form a disordered region; it reads MNDSGNSSKVNVRPPSAGLGAPSPGKR. A compositionally biased stretch (low complexity) spans 14 to 24; that stretch reads PPSAGLGAPSP. The [4Fe-4S] cluster site is built by Cys-74, Cys-79, Cys-85, Cys-100, Cys-104, Cys-107, and Ser-311. The 215-residue stretch at 86-300 folds into the Radical SAM core domain; it reads WEDREATFLI…KEQAKEIGFS (215 aa).

The protein belongs to the radical SAM superfamily. Lipoyl synthase family. It depends on [4Fe-4S] cluster as a cofactor.

The protein resides in the cytoplasm. The catalysed reaction is [[Fe-S] cluster scaffold protein carrying a second [4Fe-4S](2+) cluster] + N(6)-octanoyl-L-lysyl-[protein] + 2 oxidized [2Fe-2S]-[ferredoxin] + 2 S-adenosyl-L-methionine + 4 H(+) = [[Fe-S] cluster scaffold protein] + N(6)-[(R)-dihydrolipoyl]-L-lysyl-[protein] + 4 Fe(3+) + 2 hydrogen sulfide + 2 5'-deoxyadenosine + 2 L-methionine + 2 reduced [2Fe-2S]-[ferredoxin]. The protein operates within protein modification; protein lipoylation via endogenous pathway; protein N(6)-(lipoyl)lysine from octanoyl-[acyl-carrier-protein]: step 2/2. Its function is as follows. Catalyzes the radical-mediated insertion of two sulfur atoms into the C-6 and C-8 positions of the octanoyl moiety bound to the lipoyl domains of lipoate-dependent enzymes, thereby converting the octanoylated domains into lipoylated derivatives. The chain is Lipoyl synthase from Tropheryma whipplei (strain TW08/27) (Whipple's bacillus).